The sequence spans 149 residues: Calmodulin (149 aa).

Alanine 2 is modified (N-acetylalanine). 4 consecutive EF-hand domains span residues 8 to 43, 44 to 79, 81 to 116, and 117 to 149; these read EQIA…LGQN, PTEA…KMKD, DSEE…LGEK, and LTDE…MTAK. Ca(2+) contacts are provided by aspartate 21, aspartate 23, aspartate 25, threonine 27, glutamate 32, aspartate 57, aspartate 59, asparagine 61, threonine 63, glutamate 68, aspartate 94, aspartate 96, asparagine 98, tyrosine 100, and glutamate 105. Lysine 116 bears the N6,N6,N6-trimethyllysine mark. The Ca(2+) site is built by aspartate 130, aspartate 132, aspartate 134, glutamine 136, and glutamate 141.

Belongs to the calmodulin family.

Functionally, calmodulin acts as part of a calcium signal transduction pathway by mediating the control of a large number of enzymes, ion channels, aquaporins and other proteins through calcium-binding. Calcium-binding is required for the activation of calmodulin. Among the enzymes to be stimulated by the calmodulin-calcium complex are a number of protein kinases, such as myosin light-chain kinases and calmodulin-dependent protein kinase type II (CaMK2), and phosphatases. The protein is Calmodulin (calm) of Epinephelus akaara (Hong Kong grouper).